The sequence spans 251 residues: Pyridoxine 5'-phosphate synthase (251 aa).

Position 7 (Asn-7) interacts with 3-amino-2-oxopropyl phosphate. 9–10 serves as a coordination point for 1-deoxy-D-xylulose 5-phosphate; sequence DH. Arg-18 provides a ligand contact to 3-amino-2-oxopropyl phosphate. His-43 (proton acceptor) is an active-site residue. 1-deoxy-D-xylulose 5-phosphate is bound by residues Arg-45 and His-50. Glu-70 functions as the Proton acceptor in the catalytic mechanism. Thr-100 is a binding site for 1-deoxy-D-xylulose 5-phosphate. Catalysis depends on His-198, which acts as the Proton donor. 3-amino-2-oxopropyl phosphate-binding positions include Ala-199 and 220 to 221; that span reads GH.

Belongs to the PNP synthase family. Homooctamer; tetramer of dimers.

The protein localises to the cytoplasm. It catalyses the reaction 3-amino-2-oxopropyl phosphate + 1-deoxy-D-xylulose 5-phosphate = pyridoxine 5'-phosphate + phosphate + 2 H2O + H(+). It functions in the pathway cofactor biosynthesis; pyridoxine 5'-phosphate biosynthesis; pyridoxine 5'-phosphate from D-erythrose 4-phosphate: step 5/5. Functionally, catalyzes the complicated ring closure reaction between the two acyclic compounds 1-deoxy-D-xylulose-5-phosphate (DXP) and 3-amino-2-oxopropyl phosphate (1-amino-acetone-3-phosphate or AAP) to form pyridoxine 5'-phosphate (PNP) and inorganic phosphate. The protein is Pyridoxine 5'-phosphate synthase of Aromatoleum aromaticum (strain DSM 19018 / LMG 30748 / EbN1) (Azoarcus sp. (strain EbN1)).